The chain runs to 520 residues: Laccase-1 (520 aa).

Positions 1 to 19 (MRLSNALVLVAACISSVVA) are cleaved as a signal peptide. 3 consecutive Plastocyanin-like domains span residues 21–145 (TRTF…FIVY), 157–305 (VDDE…LTLA), and 375–488 (TVPV…FAEA). Cu cation contacts are provided by His-82 and His-84. Disulfide bonds link Cys-103–Cys-509 and Cys-135–Cys-229. N-linked (GlcNAc...) asparagine glycosylation occurs at Asn-108. 2 residues coordinate Cu cation: His-127 and His-129. Asn-239 and Asn-299 each carry an N-linked (GlcNAc...) asparagine glycan. Residues His-417, His-420, His-422, His-470, Cys-471, His-472, and His-476 each contribute to the Cu cation site. The N-linked (GlcNAc...) asparagine glycan is linked to Asn-492.

Belongs to the multicopper oxidase family. Requires Cu cation as cofactor.

The protein localises to the secreted. The enzyme catalyses 4 hydroquinone + O2 = 4 benzosemiquinone + 2 H2O. Functionally, lignin degradation and detoxification of lignin-derived products. In Agaricus bisporus (White button mushroom), this protein is Laccase-1 (lcc1).